Reading from the N-terminus, the 860-residue chain is Beta-glucosidase A (860 aa).

A signal peptide spans Met-1–Ala-19. Asn-61, Asn-211, and Asn-252 each carry an N-linked (GlcNAc...) asparagine glycan. Asp-280 is an active-site residue. N-linked (GlcNAc...) asparagine glycans are attached at residues Asn-315, Asn-322, Asn-354, Asn-387, Asn-442, Asn-523, Asn-542, Asn-564, Asn-658, Asn-690, and Asn-712. Residues Ser-719–Gly-753 are disordered.

Belongs to the glycosyl hydrolase 3 family.

The protein resides in the secreted. The catalysed reaction is Hydrolysis of terminal, non-reducing beta-D-glucosyl residues with release of beta-D-glucose.. The protein operates within glycan metabolism; cellulose degradation. Functionally, beta-glucosidases are one of a number of cellulolytic enzymes involved in the degradation of cellulosic biomass. Catalyzes the last step releasing glucose from the inhibitory cellobiose. This Aspergillus kawachii (strain NBRC 4308) (White koji mold) protein is Beta-glucosidase A (bglA).